The primary structure comprises 898 residues: Dipeptidyl peptidase 8 (898 aa).

Residues S755, D833, and H865 each act as charge relay system in the active site.

It belongs to the peptidase S9B family. DPPIV subfamily. Homodimer. Forms a ternary complex with NLRP1, composed of a DPP8 homodimer, one full-length NLRP1 protein, and one cleaved C-terminus of NLRP1 (NACHT, LRR and PYD domains-containing protein 1, C-terminus). Forms a ternary complex with CARD8, composed of a DPP8 homodimer, one full-length NLRP1 protein, and one cleaved C-terminus of CARD8 (Caspase recruitment domain-containing protein 8, C-terminus). In the ternary complex, only one subunit of the DPP8 homodimer is bound to NLRP1 or CARD8. As to expression, ubiquitously expressed, with highest levels in testis, placenta, prostate, muscle and brain.

It is found in the cytoplasm. It carries out the reaction Release of an N-terminal dipeptide, Xaa-Yaa-|-Zaa-, from a polypeptide, preferentially when Yaa is Pro, provided Zaa is neither Pro nor hydroxyproline.. Inhibited by zinc. Inhibited by the serine proteinase inhibitor 4-(2-aminoethyl)benzenesulphonyl fluoride (AEBSF), and by di-isopropylfluorophosphate. Specifically inhibited by isoindoline derivatives. Inhibited by Val-boroPro (Talabostat, PT-100), a non-selective inhibitor, which triggers pyroptosis in monocytes and macrophages. Dipeptidyl peptidase that cleaves off N-terminal dipeptides from proteins having a Pro or Ala residue at position 2. Acts as a key inhibitor of caspase-1-dependent monocyte and macrophage pyroptosis in resting cells by preventing activation of NLRP1 and CARD8. Sequesters the cleaved C-terminal part of NLRP1 and CARD8, which respectively constitute the active part of the NLRP1 and CARD8 inflammasomes, in a ternary complex, thereby preventing their oligomerization and activation. The dipeptidyl peptidase activity is required to suppress NLRP1 and CARD8; however, neither NLRP1 nor CARD8 are bona fide substrates of DPP8, suggesting the existence of substrate(s) required for NLRP1 and CARD8 inhibition. This is Dipeptidyl peptidase 8 from Homo sapiens (Human).